Reading from the N-terminus, the 1333-residue chain is snRNA-activating protein complex subunit 4 (1333 aa).

Residues 29–84 form a disordered region; that stretch reads HFEVSESSLSSDSEADSLPDEDLETAGAPILEEEGSSESSNDEEDPKDKALPEDPE. 2 stretches are compositionally biased toward acidic residues: residues 41-52 and 59-73; these read SEADSLPDEDLE and LEEEGSSESSNDEED. A Phosphoserine modification is found at Ser68. Residues 84–133 form an SNAPC5-binding region; sequence ETCLQLNMVYQEVIREKLAEVSQLLAQNQEQQEEILFDLSGTKCPKVKDG. The Myb-like 1 domain maps to 250 to 288; that stretch reads EEALLGNRLDSHDWEKISNINFEGARSAEEIRKFWQSSE. Positions 289 to 343 constitute an HTH myb-type 1 domain; the sequence is HPSISKQEWSTEEVERLKAIAATHGHLEWHLVAEELGTSRSAFQCLQKFQQYNKT. A DNA-binding region (H-T-H motif) is located at residues 317–341; that stretch reads WHLVAEELGTSRSAFQCLQKFQQYN. Residues 344-395 form the Myb-like 2 domain; that stretch reads LKRKEWTEEEDHMLTQLVQEMRVGNHIPYRKIVYFMEGRDSMQLIYRWTKSL. 2 consecutive HTH myb-type domains span residues 396–451 and 452–503; these read DPSL…HFSL and KKGR…RKKQ. 2 DNA-binding regions (H-T-H motif) span residues 424–447 and 476–499; these read WFKIREEVPGRSDAQCRDRYIRRL and WARIASELPHRSGSQCLSKWKILA. Residues 503 to 515 are compositionally biased toward basic residues; that stretch reads QHLQRKRGQRPRH. Disordered stretches follow at residues 503–558, 662–702, 811–842, and 1079–1117; these read QHLQ…LEKS, LMKE…QNKQ, NAKNNTGCLPSMTGEQTAKRASHKGRPRLGSC, and LPSPAKTPAFLEQPPASTDTEPKGPQGQEIPPTPGPEKA. A compositionally biased stretch (low complexity) spans 516–546; sequence SSQWSSSGSSSSSSEDYGSSSGSDGSSGSEN. Composition is skewed to polar residues over residues 672 to 686 and 811 to 826; these read LPSSRSGSDPGNNTA and NAKNNTGCLPSMTGEQ. The segment at 1131-1247 is SNAPC2-binding; sequence AIVTWLKGCQ…NSIPTTLSPD (117 aa). Residues Ser1252, Ser1254, Ser1301, and Ser1309 each carry the phosphoserine modification. The segment at 1282–1333 is disordered; that stretch reads PAAPDPVQSHLVSPGQRAPSPGEVSAPSPLDASDGLDDLNVLRTRRARHSRR. The span at 1324-1333 shows a compositional bias: basic residues; it reads RTRRARHSRR.

Part of the SNAPc composed of 5 subunits: SNAPC1, SNAPC2, SNAPC3, SNAPC4 and SNAPC5. SNAPC4 interacts with SNAPC1, SNAPC2, SNAPC5, BRF2 and TBP.

Its subcellular location is the nucleus. In terms of biological role, part of the SNAPc complex required for the transcription of both RNA polymerase II and III small-nuclear RNA genes. Binds to the proximal sequence element (PSE), a non-TATA-box basal promoter element common to these 2 types of genes. Recruits TBP and BRF2 to the U6 snRNA TATA box. The chain is snRNA-activating protein complex subunit 4 from Mus musculus (Mouse).